The primary structure comprises 258 residues: Cytochrome P450 1A2 (258 aa).

The protein belongs to the cytochrome P450 family. Requires heme as cofactor.

The protein resides in the endoplasmic reticulum membrane. It is found in the microsome membrane. It catalyses the reaction an organic molecule + reduced [NADPH--hemoprotein reductase] + O2 = an alcohol + oxidized [NADPH--hemoprotein reductase] + H2O + H(+). Its function is as follows. Cytochromes P450 are a group of heme-thiolate monooxygenases. In liver microsomes, this enzyme is involved in an NADPH-dependent electron transport pathway. It oxidizes a variety of structurally unrelated compounds, including steroids, fatty acids, and xenobiotics. This Gallus gallus (Chicken) protein is Cytochrome P450 1A2 (CYP1A2).